A 272-amino-acid polypeptide reads, in one-letter code: HMP-PP phosphatase (272 aa).

D8 serves as the catalytic Nucleophile. D8, D10, and D212 together coordinate Mg(2+).

The protein belongs to the HAD-like hydrolase superfamily. Cof family. Mg(2+) serves as cofactor.

It carries out the reaction 4-amino-2-methyl-5-(diphosphooxymethyl)pyrimidine + H2O = 4-amino-2-methyl-5-(phosphooxymethyl)pyrimidine + phosphate + H(+). Catalyzes the hydrolysis of 4-amino-2-methyl-5-hydroxymethylpyrimidine pyrophosphate (HMP-PP) to 4-amino-2-methyl-5-hydroxymethylpyrimidine phosphate (HMP-P). The chain is HMP-PP phosphatase from Salmonella schwarzengrund (strain CVM19633).